The sequence spans 125 residues: Apoptosis inhibitor Rv3655c (125 aa).

The first 33 residues, 1 to 33, serve as a signal peptide directing secretion; sequence MEAALAIATLVLVLVLCLAGVTAVSMQVRCIDA.

As to quaternary structure, interacts with human E3 ubiquitin-protein ligase RNF213.

It is found in the secreted. The protein resides in the host cytoplasm. Its function is as follows. Effector protein that participates in the suppression of macrophage apoptosis by blocking the extrinsic pathway. Interferes with caspase-8 activation and binds to the host E3 ubiquitin-protein ligase RNF213, whose fusion partners have anti-apoptotic function. The chain is Apoptosis inhibitor Rv3655c from Mycobacterium tuberculosis (strain ATCC 25618 / H37Rv).